We begin with the raw amino-acid sequence, 102 residues long: Small ribosomal subunit protein uS10 (102 aa).

It belongs to the universal ribosomal protein uS10 family. In terms of assembly, part of the 30S ribosomal subunit.

In terms of biological role, involved in the binding of tRNA to the ribosomes. This is Small ribosomal subunit protein uS10 from Saccharolobus islandicus (strain M.16.4 / Kamchatka #3) (Sulfolobus islandicus).